An 86-amino-acid polypeptide reads, in one-letter code: Colicin-E9 immunity protein (86 aa).

Belongs to the colicins ColE2/ColE8/ColE9 and pyocins S1/S2 family.

Functionally, this protein is able to protect a cell, which harbors the plasmid ColE9 encoding colicin E9, against colicin E9, it binds specifically to the DNase-type colicin and inhibits its bactericidal activity. The protein is Colicin-E9 immunity protein (imm) of Escherichia coli.